A 372-amino-acid chain; its full sequence is tRNA-specific 2-thiouridylase MnmA (372 aa).

ATP-binding positions include 17–24 and methionine 43; that span reads GMSGGVDS. An interaction with target base in tRNA region spans residues 103 to 105; sequence NPD. The active-site Nucleophile is cysteine 108. The cysteines at positions 108 and 205 are disulfide-linked. Residue glycine 133 coordinates ATP. The segment at 155–157 is interaction with tRNA; sequence KDQ. Cysteine 205 acts as the Cysteine persulfide intermediate in catalysis. The segment at 317–318 is interaction with tRNA; sequence RY.

The protein belongs to the MnmA/TRMU family.

It is found in the cytoplasm. The catalysed reaction is S-sulfanyl-L-cysteinyl-[protein] + uridine(34) in tRNA + AH2 + ATP = 2-thiouridine(34) in tRNA + L-cysteinyl-[protein] + A + AMP + diphosphate + H(+). Its function is as follows. Catalyzes the 2-thiolation of uridine at the wobble position (U34) of tRNA, leading to the formation of s(2)U34. In Shewanella sediminis (strain HAW-EB3), this protein is tRNA-specific 2-thiouridylase MnmA.